A 246-amino-acid chain; its full sequence is MDATAYRGLLEEGLASLGVEAEPGGVEAVLLHLDLVREWNERMNLTAITDPQEMVIKHALDAASGLAVAGVEPGQRVIDVGTGAGFPGVVWKCLRPGIDLTLLESLQKRCRFLEEVGQAVIGPLAGGEGYQVVWGRAEDVGRNPAHRERYDLVTARAVAELRVLAEYCLPLARVGGRFLAMKGPSVGEEILAAEAAVEKLGGRLEEVRELELPDGGGRRSLVLIRKERPTPKAYPRRAGVPAKSPL.

S-adenosyl-L-methionine contacts are provided by residues Gly81, Phe86, 137–138 (AE), and Arg156. Residues 221 to 246 (LVLIRKERPTPKAYPRRAGVPAKSPL) form a disordered region.

The protein belongs to the methyltransferase superfamily. RNA methyltransferase RsmG family.

Its subcellular location is the cytoplasm. Specifically methylates the N7 position of a guanine in 16S rRNA. The polypeptide is Ribosomal RNA small subunit methyltransferase G (Symbiobacterium thermophilum (strain DSM 24528 / JCM 14929 / IAM 14863 / T)).